The following is a 347-amino-acid chain: ATP-dependent kinase YFH7 (347 aa).

33–41 (GPPGSGKST) serves as a coordination point for ATP.

It belongs to the YFH7 family.

Its function is as follows. ATP-dependent kinase that could be involved in endoplasmic reticulum membrane assembly. The protein is ATP-dependent kinase YFH7 (YFH7) of Lachancea thermotolerans (strain ATCC 56472 / CBS 6340 / NRRL Y-8284) (Yeast).